Here is a 247-residue protein sequence, read N- to C-terminus: Aliphatic sulfonates import ATP-binding protein SsuB 1 (247 aa).

An ABC transporter domain is found at L7–T222. G39 to S46 lines the ATP pocket.

It belongs to the ABC transporter superfamily. Aliphatic sulfonates importer (TC 3.A.1.17.2) family. As to quaternary structure, the complex is composed of two ATP-binding proteins (SsuB), two transmembrane proteins (SsuC) and a solute-binding protein (SsuA).

It is found in the cell membrane. It catalyses the reaction ATP + H2O + aliphatic sulfonate-[sulfonate-binding protein]Side 1 = ADP + phosphate + aliphatic sulfonateSide 2 + [sulfonate-binding protein]Side 1.. Its function is as follows. Part of the ABC transporter complex SsuABC involved in aliphatic sulfonates import. Responsible for energy coupling to the transport system. This is Aliphatic sulfonates import ATP-binding protein SsuB 1 from Shouchella clausii (strain KSM-K16) (Alkalihalobacillus clausii).